We begin with the raw amino-acid sequence, 673 residues long: MAGKAAEERGLPKGATPQDTSGLQDRLFSSESDNSLYFTYSGQPNTLEVRDLNYQVDLASQVPWFEQLAQFKMPWTSPSCQNSCELGIQNLSFKVRSGQMLAIIGSSGCGRASLLDVITGRGHGGKIKSGQIWINGQPSSPQLVRKCVAHVRQHNQLLPNLTVRETLAFIAQMRLPRTFSQAQRDKRVEDVIAELRLRQCADTRVGNMYVRGLSGGERRRVSIGVQLLWNPGILILDEPTSGLDSFTAHNLVKTLSRLAKGNRLVLISLHQPRSDIFRLFDLVLLMTSGTPIYLGAAQHMVQYFTAIGYPCPRYSNPADFYVDLTSIDRRSREQELATREKAQSLAALFLEKVRDLDDFLWKAETKDLDEDTCVESSVTPLDTNCLPSPTKMPGAVQQFTTLIRRQISNDFRDLPTLLIHGAEACLMSMTIGFLYFGHGSIQLSFMDTAALLFMIGALIPFNVILDVISKCYSERAMLYYELEDGLYTTGPYFFAKILGELPEHCAYIIIYGMPTYWLANLRPGLQPFLLHFLLVWLVVFCCRIMALAAAALLPTFHMASFFSNALYNSFYLAGGFMINLSSLWTVPAWISKVSFLRWCFEGLMKIQFSRRTYKMPLGNLTIAVSGDKILSVMELDSYPLYAIYLIVIGLSGGFMVLYYVSLRFIKQKPSQDW.

Residues 1-11 (MAGKAAEERGL) show a composition bias toward basic and acidic residues. Residues 1–25 (MAGKAAEERGLPKGATPQDTSGLQD) are disordered. At 1-416 (MAGKAAEERG…ISNDFRDLPT (416 aa)) the chain is on the cytoplasmic side. The region spanning 47–313 (LEVRDLNYQV…FTAIGYPCPR (267 aa)) is the ABC transporter domain. The ABC transmembrane type-2 domain occupies 411 to 665 (FRDLPTLLIH…VLYYVSLRFI (255 aa)). The chain crosses the membrane as a helical span at residues 417–437 (LLIHGAEACLMSMTIGFLYFG). Over 438–447 (HGSIQLSFMD) the chain is Extracellular. A helical transmembrane segment spans residues 448 to 468 (TAALLFMIGALIPFNVILDVI). The Cytoplasmic portion of the chain corresponds to 469–497 (SKCYSERAMLYYELEDGLYTTGPYFFAKI). Residues 498 to 518 (LGELPEHCAYIIIYGMPTYWL) traverse the membrane as a helical segment. Residues 519–527 (ANLRPGLQP) are Extracellular-facing. A helical transmembrane segment spans residues 528–548 (FLLHFLLVWLVVFCCRIMALA). Over 549–555 (AAALLPT) the chain is Cytoplasmic. A helical membrane pass occupies residues 556 to 576 (FHMASFFSNALYNSFYLAGGF). Residues 577–639 (MINLSSLWTV…LSVMELDSYP (63 aa)) are Extracellular-facing. N619 carries N-linked (GlcNAc...) asparagine glycosylation. A helical transmembrane segment spans residues 640–660 (LYAIYLIVIGLSGGFMVLYYV). Residues 661-673 (SLRFIKQKPSQDW) lie on the Cytoplasmic side of the membrane.

This sequence belongs to the ABC transporter superfamily. ABCG family. Eye pigment precursor importer (TC 3.A.1.204) subfamily. Heterodimer with ABCG8. Mg(2+) serves as cofactor. N-glycosylated. As to expression, predominantly expressed in the liver. Low expression levels in the small intestine and colon. Very low levels in other tissues, including brain, heart and spleen.

The protein resides in the cell membrane. The protein localises to the apical cell membrane. The catalysed reaction is cholesterol(in) + ATP + H2O = cholesterol(out) + ADP + phosphate + H(+). It carries out the reaction sitosterol(in) + ATP + H2O = sitosterol(out) + ADP + phosphate + H(+). The ATPase activity of the heterodimer is stimulated by cholate. Taurocholate, glycocholate, taurochenodeoxycholate, glycochenodeoxycholate and taurodeoxycholate also stimulate ATPase activity, but to a lower degree. Glycodeoxycholate has no significant effect on ATPase activity. ATPase activity is inhibited by vanadate and by berillium fluoride. Its function is as follows. ABCG5 and ABCG8 form an obligate heterodimer that mediates Mg(2+)- and ATP-dependent sterol transport across the cell membrane. Plays an essential role in the selective transport of the dietary cholesterol in and out of the enterocytes and in the selective sterol excretion by the liver into bile. Required for normal sterol homeostasis. The heterodimer with ABCG5 has ATPase activity. This Homo sapiens (Human) protein is ATP-binding cassette sub-family G member 8.